A 395-amino-acid chain; its full sequence is Pyruvate synthase subunit PorA (395 aa).

As to quaternary structure, heterotetramer of one alpha, one beta, one delta and one gamma chain.

It carries out the reaction 2 oxidized [2Fe-2S]-[ferredoxin] + pyruvate + CoA = 2 reduced [2Fe-2S]-[ferredoxin] + acetyl-CoA + CO2 + H(+). This Pyrococcus horikoshii (strain ATCC 700860 / DSM 12428 / JCM 9974 / NBRC 100139 / OT-3) protein is Pyruvate synthase subunit PorA (porA).